The sequence spans 267 residues: Glucosamine-6-phosphate deaminase (267 aa).

Aspartate 72 (proton acceptor; for enolization step) is an active-site residue. Residue aspartate 141 is the For ring-opening step of the active site. Histidine 143 serves as the catalytic Proton acceptor; for ring-opening step. Residue glutamate 148 is the For ring-opening step of the active site.

It belongs to the glucosamine/galactosamine-6-phosphate isomerase family. NagB subfamily. In terms of assembly, homohexamer.

The enzyme catalyses alpha-D-glucosamine 6-phosphate + H2O = beta-D-fructose 6-phosphate + NH4(+). It functions in the pathway amino-sugar metabolism; N-acetylneuraminate degradation; D-fructose 6-phosphate from N-acetylneuraminate: step 5/5. Allosterically activated by N-acetylglucosamine 6-phosphate (GlcNAc6P). Its function is as follows. Catalyzes the reversible isomerization-deamination of glucosamine 6-phosphate (GlcN6P) to form fructose 6-phosphate (Fru6P) and ammonium ion. The sequence is that of Glucosamine-6-phosphate deaminase from Actinobacillus pleuropneumoniae serotype 3 (strain JL03).